Here is a 236-residue protein sequence, read N- to C-terminus: 1-(5-phosphoribosyl)-5-[(5-phosphoribosylamino)methylideneamino] imidazole-4-carboxamide isomerase (236 aa).

Aspartate 8 serves as the catalytic Proton acceptor. Catalysis depends on aspartate 129, which acts as the Proton donor.

This sequence belongs to the HisA/HisF family.

The protein resides in the cytoplasm. The catalysed reaction is 1-(5-phospho-beta-D-ribosyl)-5-[(5-phospho-beta-D-ribosylamino)methylideneamino]imidazole-4-carboxamide = 5-[(5-phospho-1-deoxy-D-ribulos-1-ylimino)methylamino]-1-(5-phospho-beta-D-ribosyl)imidazole-4-carboxamide. Its pathway is amino-acid biosynthesis; L-histidine biosynthesis; L-histidine from 5-phospho-alpha-D-ribose 1-diphosphate: step 4/9. This Methanoregula boonei (strain DSM 21154 / JCM 14090 / 6A8) protein is 1-(5-phosphoribosyl)-5-[(5-phosphoribosylamino)methylideneamino] imidazole-4-carboxamide isomerase.